The following is a 250-amino-acid chain: MAETAPLRVQLIAKTDFLAPPDVPWTTDADGGPALVEFAGRACYQSWSKPNPKTATNAGYLRHIIDVGHFSVLEHASVSFYITGISRSCTHELIRHRHFSYSQLSQRYVPEKDSRVVVPPGMEDDADLRHILTEAADAARATYSELLAKLEAKFADQPNAILRRKQARQAARAVLPNATETRIVVTGNYRAWRHFIAMRASEHADVEIRRLAIECLRQLAAVAPAVFADFEVTTLADGTEVATSPLATEA.

The ThyX domain maps to 7-233 (LRVQLIAKTD…PAVFADFEVT (227 aa)). FAD contacts are provided by residues S71, 95 to 97 (RHR), and Q103. DUMP contacts are provided by residues 92–95 (ELIR), 103–107 (QLSQR), and R172. The ThyX motif motif lies at 95-105 (RHRHFSYSQLS). FAD-binding positions include 188–190 (NYR) and H194. Residue R199 participates in dUMP binding. Residue R199 is the Involved in ionization of N3 of dUMP, leading to its activation of the active site.

The protein belongs to the thymidylate synthase ThyX family. Homotetramer. The cofactor is FAD.

The catalysed reaction is dUMP + (6R)-5,10-methylene-5,6,7,8-tetrahydrofolate + NADPH + H(+) = dTMP + (6S)-5,6,7,8-tetrahydrofolate + NADP(+). It functions in the pathway pyrimidine metabolism; dTTP biosynthesis. Its function is as follows. Catalyzes the reductive methylation of 2'-deoxyuridine-5'-monophosphate (dUMP) to 2'-deoxythymidine-5'-monophosphate (dTMP) while utilizing 5,10-methylenetetrahydrofolate (mTHF) as the methyl donor, and NADPH and FADH(2) as the reductant. The protein is Flavin-dependent thymidylate synthase of Mycobacterium bovis (strain ATCC BAA-935 / AF2122/97).